The following is a 396-amino-acid chain: Cytochrome b (396 aa).

4 helical membrane passes run 37–57 (FGSL…ILAM), 81–102 (WLMR…YAHI), 117–137 (WNVG…GYVL), and 182–202 (FFTF…IHIM). Positions 87 and 101 each coordinate heme b. Histidine 186 and histidine 200 together coordinate heme b. Residue histidine 205 participates in a ubiquinone binding. The next 4 membrane-spanning stretches (helical) occupy residues 230–250 (FKDI…SLLA), 292–312 (LGGV…PFTH), 324–344 (LAQI…WLGG), and 351–371 (FILM…LVFP).

This sequence belongs to the cytochrome b family. The cytochrome bc1 complex contains 3 respiratory subunits (MT-CYB, CYC1 and UQCRFS1), 2 core proteins (UQCRC1 and UQCRC2) and probably 6 low-molecular weight proteins. It depends on heme b as a cofactor.

The protein localises to the mitochondrion inner membrane. In terms of biological role, component of the ubiquinol-cytochrome c reductase complex (complex III or cytochrome b-c1 complex) that is part of the mitochondrial respiratory chain. The b-c1 complex mediates electron transfer from ubiquinol to cytochrome c. Contributes to the generation of a proton gradient across the mitochondrial membrane that is then used for ATP synthesis. The protein is Cytochrome b (mt-cyb) of Petromyzon marinus (Sea lamprey).